The following is a 195-amino-acid chain: Phosphoheptose isomerase (195 aa).

The region spanning 36 to 195 (VSKVLQSGNT…IVEYNLFKME (160 aa)) is the SIS domain. 51–53 (NGG) serves as a coordination point for substrate. Zn(2+) contacts are provided by histidine 60 and glutamate 64. Substrate is bound by residues glutamate 64, 95–96 (ND), 121–123 (STS), serine 126, and glutamine 173. 2 residues coordinate Zn(2+): glutamine 173 and histidine 181.

The protein belongs to the SIS family. GmhA subfamily. Requires Zn(2+) as cofactor.

The protein resides in the cytoplasm. The enzyme catalyses 2 D-sedoheptulose 7-phosphate = D-glycero-alpha-D-manno-heptose 7-phosphate + D-glycero-beta-D-manno-heptose 7-phosphate. The protein operates within carbohydrate biosynthesis; D-glycero-D-manno-heptose 7-phosphate biosynthesis; D-glycero-alpha-D-manno-heptose 7-phosphate and D-glycero-beta-D-manno-heptose 7-phosphate from sedoheptulose 7-phosphate: step 1/1. Catalyzes the isomerization of sedoheptulose 7-phosphate in D-glycero-D-manno-heptose 7-phosphate. The sequence is that of Phosphoheptose isomerase from Leptospira borgpetersenii serovar Hardjo-bovis (strain JB197).